The primary structure comprises 152 residues: Ribonuclease H (152 aa).

The RNase H type-1 domain occupies 1–142 (MGSKVVIYTD…ADKLAVQGRE (142 aa)). D10, E48, D70, and D134 together coordinate Mg(2+).

The protein belongs to the RNase H family. As to quaternary structure, monomer. Mg(2+) is required as a cofactor.

The protein resides in the cytoplasm. The catalysed reaction is Endonucleolytic cleavage to 5'-phosphomonoester.. Its function is as follows. Endonuclease that specifically degrades the RNA of RNA-DNA hybrids. The sequence is that of Ribonuclease H from Rickettsia massiliae (strain Mtu5).